The primary structure comprises 854 residues: Probable disease resistance protein At1g51480 (854 aa).

Residues Arg25–Lys62 are a coiled coil. Residues Ala138 to Tyr441 enclose the NB-ARC domain. Gly180–Thr187 lines the ATP pocket. LRR repeat units follow at residues Ile514–Ser535, Asn536–Phe557, Lys560–Leu582, Ser584–Leu605, Lys607–Leu629, and Asn631–Leu652.

This sequence belongs to the disease resistance NB-LRR family.

Its function is as follows. Probable disease resistance protein. The protein is Probable disease resistance protein At1g51480 of Arabidopsis thaliana (Mouse-ear cress).